Here is a 141-residue protein sequence, read N- to C-terminus: Large ribosomal subunit protein uL16 (141 aa).

A compositionally biased stretch (basic residues) spans 1 to 19 (MLMPKKTKYRKQQKGRNRG). The interval 1-22 (MLMPKKTKYRKQQKGRNRGKAY) is disordered.

Belongs to the universal ribosomal protein uL16 family. Part of the 50S ribosomal subunit.

Functionally, binds 23S rRNA and is also seen to make contacts with the A and possibly P site tRNAs. The sequence is that of Large ribosomal subunit protein uL16 from Nitratiruptor sp. (strain SB155-2).